Reading from the N-terminus, the 1419-residue chain is Collagen alpha-1(II) chain (1419 aa).

The first 25 residues, 1–25 (MIRLGAPQSLVLLTLLIATVLQCQG), serve as a signal peptide directing secretion. The propeptide at 26–113 (QDARKLGPKG…PGLGGGNFAA (88 aa)) is N-terminal propeptide. Positions 28–1168 (ARKLGPKGQK…GQREKGPDPL (1141 aa)) are disordered. Basic and acidic residues-rich tracts occupy residues 36-47 (QKGEPGDIKDII) and 64-85 (PRGD…RDGE). Pro residues predominate over residues 89–104 (PGNPGPPGPPGPPGPP). Residue K122 is modified to 5-hydroxylysine. K122 carries O-linked (Gal...) hydroxylysine glycosylation. A compositionally biased stretch (low complexity) spans 124 to 135 (GGAQMGVMQGPM). Positions 133 to 1146 (GPMGPMGPRG…PGPPGPPGPP (1014 aa)) are triple-helical region. The span at 140 to 149 (PRGPPGPAGA) shows a compositional bias: pro residues. Low complexity predominate over residues 150–171 (PGPQGFQGNPGEPGEPGVSGPI). Residues 183-197 (PGDDGEAGKPGKAGE) show a composition bias toward basic and acidic residues. 5-hydroxylysine is present on residues K219, K231, and K240. O-linked (Gal...) hydroxylysine glycosylation is found at K219, K231, and K240. Composition is skewed to low complexity over residues 242 to 252 (ESGSPGENGSP) and 267 to 282 (TGPA…DGQP). The segment covering 292–301 (GPAGGPGFLG) has biased composition (gly residues). A 5-hydroxylysine modification is found at K306. K306 carries O-linked (Gal...) hydroxylysine glycosylation. Residues 335–363 (PAGASGNPGTDGIPGAKGSAGAPGIAGAP) show a composition bias toward low complexity. Pro residues predominate over residues 365–374 (FPGPRGPPGP). The segment covering 404 to 417 (ETGPAGPQGAPGPA) has biased composition (low complexity). 5-hydroxylysine is present on residues K540 and K552. K540 and K552 each carry an O-linked (Gal...) hydroxylysine glycan. The span at 554 to 563 (LAGAPGLRGL) shows a compositional bias: low complexity. 4-hydroxyproline occurs at positions 591 and 600. The residue at position 602 (P602) is a 3-hydroxyproline; partial. 2 positions are modified to 4-hydroxyproline: P603 and P606. The span at 638-668 (ERGSPGAQGLQGPRGLPGTPGTDGPKGAAGP) shows a compositional bias: low complexity. The segment covering 696–707 (KGDRGDVGEKGP) has biased composition (basic and acidic residues). Low complexity-rich tracts occupy residues 765 to 780 (AGFA…PGAK) and 809 to 846 (PTGV…NGNP). Position 839 is a 3-hydroxyproline; partial (P839). Residues P840, P846, and P852 each carry the 4-hydroxyproline modification. Residues 1001 to 1011 (APGPPGSPGPA) are compositionally biased toward pro residues. Residues 1047 to 1061 (RGDKGEAGEPGERGL) are compositionally biased toward basic and acidic residues. At P1076 the chain carries 3-hydroxyproline; partial. 2 stretches are compositionally biased toward low complexity: residues 1080–1089 (SGDQGTSGPA) and 1103–1113 (PSGKDGSNGIP). P1113 is subject to 4-hydroxyproline. P1118 is modified (3-hydroxyproline). 4-hydroxyproline is present on P1119. Residues 1131–1148 (AGPPGNPGPPGPPGPPGP) are compositionally biased toward pro residues. P1133 carries the post-translational modification 3-hydroxyproline; partial. A 4-hydroxyproline mark is found at P1134 and P1137. P1139 carries the post-translational modification 3-hydroxyproline; partial. 2 positions are modified to 4-hydroxyproline: P1140 and P1143. P1145 is subject to 3-hydroxyproline; partial. P1146 carries the 4-hydroxyproline modification. The nonhelical region (C-terminal) stretch occupies residues 1147-1173 (GPGIDMSAFAGLGQREKGPDPLQYMRA). The Fibrillar collagen NC1 domain occupies 1185 to 1419 (VEVDATLKSL…GVDIGPVCFL (235 aa)). 3 cysteine pairs are disulfide-bonded: C1215–C1247, C1255–C1417, and C1325–C1370. 5 residues coordinate Ca(2+): D1233, N1235, Q1236, C1238, and D1241. An N-linked (GlcNAc...) asparagine glycan is attached at N1320.

The protein belongs to the fibrillar collagen family. In terms of assembly, homotrimers of alpha 1(II) chains. Contains mostly 4-hydroxyproline. Prolines at the third position of the tripeptide repeating unit (G-X-P) are 4-hydroxylated in some or all of the chains. In terms of processing, contains 3-hydroxyproline at a few sites. This modification occurs on the first proline residue in the sequence motif Gly-Pro-Hyp, where Hyp is 4-hydroxyproline. Post-translationally, lysine residues at the third position of the tripeptide repeating unit (G-X-Y) are 5-hydroxylated in some or all of the chains. O-glycosylated on hydroxylated lysine residues. The O-linked glycan consists of a Glc-Gal disaccharide. As to expression, expressed in chondrocytes.

Its subcellular location is the secreted. The protein localises to the extracellular space. It is found in the extracellular matrix. Functionally, type II collagen is specific for cartilaginous tissues. It is essential for the normal embryonic development of the skeleton, for linear growth and for the ability of cartilage to resist compressive forces. This is Collagen alpha-1(II) chain from Rattus norvegicus (Rat).